A 119-amino-acid polypeptide reads, in one-letter code: uncharacterized protein (119 aa).

The first 18 residues, 1–18 (MPAVFMLASSSALQCGRG), serve as a signal peptide directing secretion. The segment at 23 to 100 (PRTEVGAGHS…MFPGPLRGPA (78 aa)) is disordered. The span at 43-71 (GNQTSVIPATSRQAALGTSWTQRRTQPLQ) shows a compositional bias: polar residues. A glycan (N-linked (GlcNAc...) asparagine) is linked at N44.

The protein resides in the secreted. This is an uncharacterized protein from Homo sapiens (Human).